A 124-amino-acid chain; its full sequence is Large ribosomal subunit protein bL12 (124 aa).

It belongs to the bacterial ribosomal protein bL12 family. In terms of assembly, homodimer. Part of the ribosomal stalk of the 50S ribosomal subunit. Forms a multimeric L10(L12)X complex, where L10 forms an elongated spine to which 2 to 4 L12 dimers bind in a sequential fashion. Binds GTP-bound translation factors.

Forms part of the ribosomal stalk which helps the ribosome interact with GTP-bound translation factors. Is thus essential for accurate translation. This chain is Large ribosomal subunit protein bL12, found in Idiomarina loihiensis (strain ATCC BAA-735 / DSM 15497 / L2-TR).